Consider the following 640-residue polypeptide: MNYFMPLRNIWNRVREFPRASTTASGITWMSRYIYGYHRLMLEDLAPGAPATERWPLYRQPSPHFLIGYQYLVRTCNDYIFDTRAYSRLKYTELVRPGHQTVNWSVMANCSYTINTGAYHRFVDFDDFQATLTQVQQAILAERVVAELALVQPMRGFGITRMHGRAGEEEVPVERLMQDYYKDLARCQDDAWGMAHRLRIQQAGPKDLVLLATIRRLKTAYFNFITSSIVSPSQEGEGEERENPDRASSRPRPQETVLSLPCDCDWLDAFVERFSDPVDLETIRSLRGVPTGQLIKCIISAVSLPNGEPPSHHFREMRGGVFTLRPRENGRAVTETMRRRRGEVIERFIDRLPVRRRRRRVPPPPAAPPEEEEMLVEEEEIEEEILGAFEREVRTTIAELIRLLEEELTVSARNSQFFNFAVNFYEAMERLEALGDVSEMPLRRWIMYFFVTEHIATTLNYLFQRLCNYAVFTRHVELNLAQVVMRARDPVGAVVYSRVWNEAGMNAFSQLIGRISNDLAATVERAGRGDLQEEEIEQFMAEIAYQDNSGDVQEILRQAAVNDTEIDSVELSFRFKLTGPVAFTQRRQIQDVNRRVVAHASLLRAQYQNLPARGADVPLPAMPPGPEPPLPPGARPRHRF.

Residues 232-257 (PSQEGEGEERENPDRASSRPRPQETV) form a disordered region. The short motif at 351-360 (RLPVRRRRRR) is the Nuclear localization signal element. At Ser-549 the chain carries O-(5'-phospho-DNA)-serine. A disordered region spans residues 614 to 640 (GADVPLPAMPPGPEPPLPPGARPRHRF). The span at 620–634 (PAMPPGPEPPLPPGA) shows a compositional bias: pro residues.

The protein belongs to the adenoviridae terminal protein family. As to quaternary structure, heterodimer with the polymerase; this heterodimer binds to bp 9 to 18 of the genome. Interacts with host POU2F1; POU2F1 binds to the auxiliary sequences in the inverted terminal repeats and tethers the pTP-POL heterodimer to the origin DNA thereby participating in the assembly of the pre-initiation complex (POL-TP-DBP-NFIA-POU2F1). Preterminal protein is used to replicate viral genome, upon genomic encapsidation it is processed first into iTP and finally into TP by adenovirus protease.

It localises to the host nucleus matrix. In terms of biological role, protein covalently bound to the viral DNA that acts as a primer for viral genomic replication by DNA strand displacement. Assembles on the viral origin of replication in an initiation complex with viral polymerase, DBP, host NFIA and host POU2F1/OCT1. During initiation, the polymerase covalently couples the first dCTP with Ser-580 of pTP. The terminal protein stimulates the template activity over 20 fold compared to protein-free templates. Neo-synthesized viral genomes are linked to two preterminal proteins, one for each 5' end. These new genomes are encapsidated in the nucleus, and during capsid maturation by viral protease, preterminal protein is first cleaved into intermediary (iTP), then into mature TP. May play a role in host nuclear matrix localization of genomic DNA. This is Preterminal protein from Human adenovirus B serotype 7 (HAdV-7).